The following is a 538-amino-acid chain: Chaperonin GroEL (538 aa).

Residues 29-32 (TLGP), 86-90 (DGTTT), G413, 479-481 (DAL), and D495 contribute to the ATP site.

Belongs to the chaperonin (HSP60) family. In terms of assembly, forms a cylinder of 14 subunits composed of two heptameric rings stacked back-to-back. Interacts with the co-chaperonin GroES.

It localises to the cytoplasm. The catalysed reaction is ATP + H2O + a folded polypeptide = ADP + phosphate + an unfolded polypeptide.. Its function is as follows. Together with its co-chaperonin GroES, plays an essential role in assisting protein folding. The GroEL-GroES system forms a nano-cage that allows encapsulation of the non-native substrate proteins and provides a physical environment optimized to promote and accelerate protein folding. This Thermotoga neapolitana protein is Chaperonin GroEL.